A 216-amino-acid polypeptide reads, in one-letter code: 4-hydroxy-tetrahydrodipicolinate reductase (216 aa).

NAD(+)-binding positions include Gly-7–Met-12, Gly-71–Thr-73, and Ala-95–Phe-98. The active-site Proton donor/acceptor is the His-127. His-128 is a binding site for (S)-2,3,4,5-tetrahydrodipicolinate. Lys-131 serves as the catalytic Proton donor. Gly-137–Thr-138 lines the (S)-2,3,4,5-tetrahydrodipicolinate pocket.

Belongs to the DapB family.

It localises to the cytoplasm. The enzyme catalyses (S)-2,3,4,5-tetrahydrodipicolinate + NAD(+) + H2O = (2S,4S)-4-hydroxy-2,3,4,5-tetrahydrodipicolinate + NADH + H(+). It catalyses the reaction (S)-2,3,4,5-tetrahydrodipicolinate + NADP(+) + H2O = (2S,4S)-4-hydroxy-2,3,4,5-tetrahydrodipicolinate + NADPH + H(+). Its pathway is amino-acid biosynthesis; L-lysine biosynthesis via DAP pathway; (S)-tetrahydrodipicolinate from L-aspartate: step 4/4. Its function is as follows. Catalyzes the conversion of 4-hydroxy-tetrahydrodipicolinate (HTPA) to tetrahydrodipicolinate. In Thermotoga sp. (strain RQ2), this protein is 4-hydroxy-tetrahydrodipicolinate reductase.